Here is a 523-residue protein sequence, read N- to C-terminus: Sucrose 6(F)-phosphate phosphorylase (523 aa).

Residues aspartate 58, histidine 96, 221-223, glutamate 264, 326-327, and lysine 434 contribute to the sucrose 6(F)-phosphate site; these read RLD and HD. The Nucleophile role is filled by aspartate 223. The active-site Proton donor/acceptor is glutamate 264.

The protein belongs to the glycosyl hydrolase 13 family. Sucrose phosphorylase subfamily. Monomer.

It catalyses the reaction sucrose 6(F)-phosphate + phosphate = beta-D-fructose 6-phosphate + alpha-D-glucose 1-phosphate. Functionally, catalyzes the reversible phosphorolysis of sucrose 6(F)-phosphate into alpha-D-glucose 1-phosphate (Glc1P) and D-fructose 6-phosphate. May be involved in a new pathway for the degradation of sucrose, which could become phosphorylated on its fructose moiety during uptake via a PTS system. Shows strict specificity since it does not catalyze reactions with alternative substrates. In Ilumatobacter coccineus (strain NBRC 103263 / KCTC 29153 / YM16-304), this protein is Sucrose 6(F)-phosphate phosphorylase.